We begin with the raw amino-acid sequence, 367 residues long: PR domain zinc finger protein 12 (367 aa).

One can recognise an SET domain in the interval 86–203; the sequence is AEVIIAQSSI…PDQELLVWYG (118 aa). C2H2-type zinc fingers lie at residues 243-265, 271-293, and 299-323; these read MRCVICHRGFNSRSNLRSHMRIH, FVCRFCNRRFSQSSTLRNHVRLH, and YKCQVCQSAYSQLAGLRAHQKSARH. Residues 318–337 are disordered; it reads QKSARHRPPSTALQAHSPAL.

This sequence belongs to the class V-like SAM-binding methyltransferase superfamily. In terms of assembly, interacts with EHMT2. Not found in adult tissues except in dorsal root ganglia.

It localises to the nucleus. Transcriptional regulator necessary for the development of nociceptive neurons, playing a key role in determining the nociceptive lineage from neural crest cell progenitors. Initiates neurogenesis and activates downstream pro-neuronal transcription factors, such as NEUROD1, BRN3A, and ISL1, specifically within nociceptive neurons, while repressing non-nociceptor cell fates. Essential for the proper function of nociceptors in adults, influencing both their excitability and their gene expression, thereby impacting how these neurons respond to various pain stimuli. The polypeptide is PR domain zinc finger protein 12 (PRDM12) (Homo sapiens (Human)).